The primary structure comprises 201 residues: Small ribosomal subunit protein uS4c (201 aa).

The tract at residues 20 to 44 (GLTSKRPTVGSELRNQSRSTKKSQY) is disordered. Positions 89-150 (MRLDNILFRL…NKKSKTLIQN (62 aa)) constitute an S4 RNA-binding domain.

It belongs to the universal ribosomal protein uS4 family. As to quaternary structure, part of the 30S ribosomal subunit. Contacts protein S5. The interaction surface between S4 and S5 is involved in control of translational fidelity.

The protein localises to the plastid. The protein resides in the chloroplast. Functionally, one of the primary rRNA binding proteins, it binds directly to 16S rRNA where it nucleates assembly of the body of the 30S subunit. In terms of biological role, with S5 and S12 plays an important role in translational accuracy. This chain is Small ribosomal subunit protein uS4c (rps4), found in Lotus japonicus (Lotus corniculatus var. japonicus).